A 396-amino-acid chain; its full sequence is Flavohemoprotein (396 aa).

Residues 1–136 form the Globin domain; sequence MLDAQTIATV…LANVFIHREA (136 aa). Heme b is bound at residue histidine 85. Residues tyrosine 95 and glutamate 135 each act as charge relay system in the active site. The segment at 147–396 is reductase; the sequence is GGWEGTRPFR…YECFGPHKVL (250 aa). One can recognise an FAD-binding FR-type domain in the interval 150 to 255; that stretch reads EGTRPFRIVA…AAPAGDFFMN (106 aa). Residues tyrosine 188 and 204–207 each bind FAD; that span reads RQYS. NADP(+) is bound at residue 268–273; the sequence is GVGQTP. 389–392 serves as a coordination point for FAD; that stretch reads CFGP.

This sequence belongs to the globin family. Two-domain flavohemoproteins subfamily. It in the C-terminal section; belongs to the flavoprotein pyridine nucleotide cytochrome reductase family. Heme b is required as a cofactor. The cofactor is FAD.

It carries out the reaction 2 nitric oxide + NADPH + 2 O2 = 2 nitrate + NADP(+) + H(+). The enzyme catalyses 2 nitric oxide + NADH + 2 O2 = 2 nitrate + NAD(+) + H(+). Functionally, is involved in NO detoxification in an aerobic process, termed nitric oxide dioxygenase (NOD) reaction that utilizes O(2) and NAD(P)H to convert NO to nitrate, which protects the bacterium from various noxious nitrogen compounds. Therefore, plays a central role in the inducible response to nitrosative stress. The polypeptide is Flavohemoprotein (Salmonella typhi).